Here is a 1366-residue protein sequence, read N- to C-terminus: DNA-directed RNA polymerase subunit beta' (1366 aa).

Residues 1-20 (MTSSKPKKTSRVRKTTKNSK) show a composition bias toward basic residues. Residues 1–37 (MTSSKPKKTSRVRKTTKNSKKNNPVTMPVLPKTPPSF) form a disordered region. The Zn(2+) site is built by cysteine 248, cysteine 315, cysteine 322, and cysteine 325. A disordered region spans residues 1292-1366 (TVDMPQSPAV…LQEEGLLSDE (75 aa)). The span at 1354-1366 (LEGLQEEGLLSDE) shows a compositional bias: low complexity.

The protein belongs to the RNA polymerase beta' chain family. RpoC2 subfamily. In terms of assembly, in cyanobacteria the RNAP catalytic core is composed of 2 alpha, 1 beta, 1 beta', 1 gamma and 1 omega subunit. When a sigma factor is associated with the core the holoenzyme is formed, which can initiate transcription. The cofactor is Zn(2+).

It catalyses the reaction RNA(n) + a ribonucleoside 5'-triphosphate = RNA(n+1) + diphosphate. Functionally, DNA-dependent RNA polymerase catalyzes the transcription of DNA into RNA using the four ribonucleoside triphosphates as substrates. This Prochlorococcus marinus (strain MIT 9215) protein is DNA-directed RNA polymerase subunit beta'.